We begin with the raw amino-acid sequence, 902 residues long: Protein translocase subunit SecA (902 aa).

ATP contacts are provided by residues Q87, 105-109 (GEGKT), and D512. The tract at residues 836-902 (DVEKVEEQHR…KFKQCCGKLK (67 aa)) is disordered. Basic and acidic residues predominate over residues 840–863 (VEEQHRKSENAPREYQHEEVEHVG). Zn(2+) contacts are provided by C886, C888, C897, and C898.

Belongs to the SecA family. Monomer and homodimer. Part of the essential Sec protein translocation apparatus which comprises SecA, SecYEG and auxiliary proteins SecDF-YajC and YidC. Zn(2+) serves as cofactor.

Its subcellular location is the cell inner membrane. The protein resides in the cytoplasm. The catalysed reaction is ATP + H2O + cellular proteinSide 1 = ADP + phosphate + cellular proteinSide 2.. Functionally, part of the Sec protein translocase complex. Interacts with the SecYEG preprotein conducting channel. Has a central role in coupling the hydrolysis of ATP to the transfer of proteins into and across the cell membrane, serving both as a receptor for the preprotein-SecB complex and as an ATP-driven molecular motor driving the stepwise translocation of polypeptide chains across the membrane. This chain is Protein translocase subunit SecA, found in Pseudoalteromonas translucida (strain TAC 125).